Here is a 351-residue protein sequence, read N- to C-terminus: Heat-inducible transcription repressor HrcA (351 aa).

The protein belongs to the HrcA family.

Functionally, negative regulator of class I heat shock genes (grpE-dnaK-dnaJ and groELS operons). Prevents heat-shock induction of these operons. The protein is Heat-inducible transcription repressor HrcA of Beutenbergia cavernae (strain ATCC BAA-8 / DSM 12333 / CCUG 43141 / JCM 11478 / NBRC 16432 / NCIMB 13614 / HKI 0122).